A 270-amino-acid chain; its full sequence is Dihydroorotate dehydrogenase B (NAD(+)), catalytic subunit (270 aa).

Residues Ser12 and Lys35–Thr36 each bind FMN. Residues Lys35, Asn59–Leu63, and Asn114 each bind substrate. Asn114 is an FMN binding site. Cys117 serves as the catalytic Nucleophile. FMN-binding residues include Lys153 and Val179. Position 180-181 (Asn180–Thr181) interacts with substrate. FMN-binding positions include Gly199, Gly226–Gly227, and Gly248–Ser249.

This sequence belongs to the dihydroorotate dehydrogenase family. Type 1 subfamily. In terms of assembly, heterotetramer of 2 PyrK and 2 PyrD type B subunits. It depends on FMN as a cofactor.

The protein localises to the cytoplasm. The enzyme catalyses (S)-dihydroorotate + NAD(+) = orotate + NADH + H(+). It functions in the pathway pyrimidine metabolism; UMP biosynthesis via de novo pathway; orotate from (S)-dihydroorotate (NAD(+) route): step 1/1. Catalyzes the conversion of dihydroorotate to orotate with NAD(+) as electron acceptor. This Thermotoga maritima (strain ATCC 43589 / DSM 3109 / JCM 10099 / NBRC 100826 / MSB8) protein is Dihydroorotate dehydrogenase B (NAD(+)), catalytic subunit (pyrD).